The sequence spans 1029 residues: Multiple C2 domain and transmembrane region protein 6 (1029 aa).

Residues 1–111 (MNKLVVEIVD…SGVQRYPLDK (111 aa)) form the C2 1 domain. The disordered stretch occupies residues 187–224 (TKKKEKESRTFHSIGAHAGGGGGAPPMSQAKQAYPPPP). 3 consecutive C2 domains span residues 277-398 (RSSG…PQWY), 437-562 (RVSH…PRWF), and 605-727 (FSSD…THFY). Positions 310, 316, 363, 365, and 371 each coordinate Ca(2+). 2 consecutive transmembrane segments (helical) span residues 864 to 884 (LILV…LFVI) and 976 to 996 (FALI…AIII).

Belongs to the MCTP family. The cofactor is Ca(2+). In terms of tissue distribution, expressed in the vascular tissues of cotyledons and rosette leaves. Accumulates in roots caps and shoot apical meristems (SAMs). Observed in flowers.

It localises to the cell membrane. It is found in the cytoplasm. The protein localises to the endosome membrane. Functionally, regulates flowering time under long days. May function as a signaling molecule by regulating the trafficking of other regulators. The chain is Multiple C2 domain and transmembrane region protein 6 from Arabidopsis thaliana (Mouse-ear cress).